The primary structure comprises 71 residues: MARRKRICRFTAEGVKEIDYKDLETLKAYITEVGKIVPARITGTNVFYQRQLATAVKRARFLALLPYTDQH.

This sequence belongs to the bacterial ribosomal protein bS18 family. Part of the 30S ribosomal subunit. Forms a tight heterodimer with protein bS6.

Binds as a heterodimer with protein bS6 to the central domain of the 16S rRNA, where it helps stabilize the platform of the 30S subunit. The sequence is that of Small ribosomal subunit protein bS18 from Dichelobacter nodosus (strain VCS1703A).